The primary structure comprises 262 residues: Type III pantothenate kinase (262 aa).

9-16 (DAGNSRIK) is an ATP binding site. Substrate is bound by residues Tyr-96 and 103 to 106 (GSDR). The active-site Proton acceptor is the Asp-105. Thr-129 contributes to the ATP binding site. Thr-189 is a substrate binding site.

Belongs to the type III pantothenate kinase family. Homodimer. Requires NH4(+) as cofactor. K(+) serves as cofactor.

The protein resides in the cytoplasm. It carries out the reaction (R)-pantothenate + ATP = (R)-4'-phosphopantothenate + ADP + H(+). It participates in cofactor biosynthesis; coenzyme A biosynthesis; CoA from (R)-pantothenate: step 1/5. Functionally, catalyzes the phosphorylation of pantothenate (Pan), the first step in CoA biosynthesis. In Burkholderia ambifaria (strain MC40-6), this protein is Type III pantothenate kinase.